Consider the following 573-residue polypeptide: Developmental and secondary metabolism regulator VEL1 (573 aa).

One can recognise a Velvet domain in the interval 26–220; that stretch reads NRHLWYQLTV…ADQGCRVRIR (195 aa). A Nuclear localization signal motif is present at residues 40 to 45; sequence ERARAC. The segment at 222–520 is disordered; sequence DVRMRKRDGK…STGGKRKHDH (299 aa). Positions 230–245 are enriched in basic and acidic residues; sequence GKGSGFDRRGEEEYSR. Composition is skewed to pro residues over residues 291–310 and 341–351; these read APPP…PPAA and APIPPATPTGP. Residues 352 to 363 show a composition bias toward low complexity; the sequence is YPTSSAAPSPYA. Pro residues predominate over residues 379–389; that stretch reads PPAPSASPAPP. Residues 432–448 are compositionally biased toward polar residues; that stretch reads TPASQPTYSTPASQPTY. Residues 458 to 475 show a composition bias toward pro residues; that stretch reads SAPPPAPYSAPAPPPPRP. The interval 476–504 is PEST; that stretch reads SMSQSSLAPLKIASLVSPLPPIEAQTEPL.

It belongs to the velvet family. VeA subfamily. As to quaternary structure, component of the heterotrimeric velvet complex composed of LAE1, VEL1 and VEL2; VEL1 acting as a bridging protein between LAE1 and VEL2. Interacts with LAE1.

Its subcellular location is the nucleus. The protein localises to the cytoplasm. Its function is as follows. Component of the velvet transcription factor complex that controls sexual/asexual developmental ratio in response to light, promoting sexual development in the darkness while stimulating asexual sporulation under illumination. The velvet complex hat acts as a global regulator for secondary metabolite gene expression. Regulates expression of the carbohydrate-active enzyme gene clusters. The sequence is that of Developmental and secondary metabolism regulator VEL1 from Hypocrea jecorina (strain QM6a) (Trichoderma reesei).